The sequence spans 320 residues: MRALALLLALPLLGARAQHGSLWTYSEGALDQVHWPREYPTCGGTRQSPIDLQRRKVQYNPSLKALKLTGYRIQVGEFPMINNGHTVQISLPPTMRMMASDGTEYIAQQMHFHWGGASSEISGSEHTIDGIRFVAEIHIVHYNSKYKSYDIAQHEPDGLAVLAALVKVEDYGENTYYSNFISHLNNIRYPGQSTVLSGLDIEDMLPENTHHYYTYRGSLTTPPCTENVHWFVLVHHVRLSSIQTWKLENSILDHQNKTLHSDYRRIQPLNGRVVESNFVNLPSQGSEFQFYVNKLNNKLEYLRRLLEKTKVEKKPHIHQA.

An N-terminal signal peptide occupies residues 1–17 (MRALALLLALPLLGARA). Residues 21–278 (SLWTYSEGAL…LNGRVVESNF (258 aa)) enclose the Alpha-carbonic anhydrase domain. A disulfide bridge connects residues Cys42 and Cys224. The Proton donor/acceptor role is filled by His85. Positions 111, 113, and 138 each coordinate Zn(2+). 220 to 221 (TT) serves as a coordination point for substrate. N-linked (GlcNAc...) asparagine glycosylation occurs at Asn256.

The protein belongs to the alpha-carbonic anhydrase family. The cofactor is Zn(2+).

Its subcellular location is the secreted. The catalysed reaction is hydrogencarbonate + H(+) = CO2 + H2O. Reversible hydration of carbon dioxide. Its role in saliva is unknown. The polypeptide is Carbonic anhydrase 6 (CA6) (Canis lupus familiaris (Dog)).